The chain runs to 375 residues: Chaperone protein DnaJ (375 aa).

Residues 5-70 enclose the J domain; that stretch reads DYYEVLGVSR…QKRAAYDQFG (66 aa). The segment at 131–209 adopts a CR-type zinc-finger fold; it reads GTTVKIRVPS…CHGSGYVEEQ (79 aa). Zn(2+) is bound by residues cysteine 144, cysteine 147, cysteine 161, cysteine 164, cysteine 183, cysteine 186, cysteine 197, and cysteine 200. 4 CXXCXGXG motif repeats span residues 144 to 151, 161 to 168, 183 to 190, and 197 to 204; these read CKSCSGSG, CGTCNGAG, CPRCRGAG, and CRSCHGSG.

The protein belongs to the DnaJ family. As to quaternary structure, homodimer. Requires Zn(2+) as cofactor.

The protein localises to the cytoplasm. In terms of biological role, participates actively in the response to hyperosmotic and heat shock by preventing the aggregation of stress-denatured proteins and by disaggregating proteins, also in an autonomous, DnaK-independent fashion. Unfolded proteins bind initially to DnaJ; upon interaction with the DnaJ-bound protein, DnaK hydrolyzes its bound ATP, resulting in the formation of a stable complex. GrpE releases ADP from DnaK; ATP binding to DnaK triggers the release of the substrate protein, thus completing the reaction cycle. Several rounds of ATP-dependent interactions between DnaJ, DnaK and GrpE are required for fully efficient folding. Also involved, together with DnaK and GrpE, in the DNA replication of plasmids through activation of initiation proteins. The sequence is that of Chaperone protein DnaJ from Hahella chejuensis (strain KCTC 2396).